The chain runs to 131 residues: Small ribosomal subunit protein uS8 (131 aa).

It belongs to the universal ribosomal protein uS8 family. Part of the 30S ribosomal subunit. Contacts proteins S5 and S12.

One of the primary rRNA binding proteins, it binds directly to 16S rRNA central domain where it helps coordinate assembly of the platform of the 30S subunit. The chain is Small ribosomal subunit protein uS8 from Thermodesulfovibrio yellowstonii (strain ATCC 51303 / DSM 11347 / YP87).